A 1020-amino-acid chain; its full sequence is Phosphatidylinositol 3-kinase VPS34 (1020 aa).

The region spanning 49 to 210 (LSTKFEDPTV…NWLDKMVLPK (162 aa)) is the C2 PI3K-type domain. The 247-residue stretch at 331-577 (DKELKPTPQL…DGPIKIYMDI (247 aa)) folds into the PIK helical domain. Positions 666–1004 (YPEESSVFKS…LINDSVNAFL (339 aa)) constitute a PI3K/PI4K catalytic domain. The segment at 672–678 (VFKSSLA) is G-loop. Positions 873–881 (GVGDRHLDN) are catalytic loop. Residues 892-913 (HADFGYILGRDPKPFPPLMKLP) are activation loop.

It belongs to the PI3/PI4-kinase family. As to quaternary structure, component of the autophagy-specific VPS34 PI3-kinase complex I composed of at least VPS15, VPS30, VPS34, and of the VPS34 PI3-kinase complex II composed of VPS15, VPS30, VPS34 and VPS38. Interacts with VMNA7. Post-translationally, autophosphorylated.

The protein localises to the golgi apparatus. It localises to the trans-Golgi network membrane. Its subcellular location is the endosome membrane. It carries out the reaction a 1,2-diacyl-sn-glycero-3-phospho-(1D-myo-inositol) + ATP = a 1,2-diacyl-sn-glycero-3-phospho-(1D-myo-inositol-3-phosphate) + ADP + H(+). Multifunctional phosphatidylinositol 3-kinase involved in acidification of vacuoles, pH-dependent cell growth, and autophagocytosis. Plays an important role in protein transport and virulence. Component of the autophagy-specific VPS34 PI3-kinase complex I essential to recruit the ATG8-phosphatidylinositol conjugate and the ATG12-ATG5 conjugate to the pre-autophagosomal structure. Also involved in endosome-to-Golgi retrograde transport as part of the VPS34 PI3-kinase complex II. This second complex is required for the endosome-to-Golgi retrieval of PEP1 and KEX2, and the recruitment of VPS5 and VPS7, two components of the retromer complex, to endosomal membranes (probably through the synthesis of a specific pool of phosphatidylinositol 3-phosphate recruiting the retromer to the endosomes). Finally, it might also be involved in ethanol tolerance and cell wall integrity. In Candida albicans (strain SC5314 / ATCC MYA-2876) (Yeast), this protein is Phosphatidylinositol 3-kinase VPS34.